Here is a 514-residue protein sequence, read N- to C-terminus: Probable E3 ubiquitin-protein ligase ARI10 (514 aa).

Residues 1 to 18 show a composition bias toward acidic residues; it reads MDYSDDDMIDNESGEENN. The segment at 1 to 26 is disordered; it reads MDYSDDDMIDNESGEENNSDGGGNES. A TRIAD supradomain region spans residues 117–322; it reads VDIQCGICFE…SDHYACNNYV (206 aa). Zn(2+)-binding residues include Cys121, Cys124, Cys138, His140, Cys143, Cys146, Cys166, Cys171, Cys210, Cys215, Cys231, Cys233, Cys238, Cys241, His246, Cys251, Cys278, and Cys281. The segment at 121–171 adopts an RING-type 1 zinc-finger fold; that stretch reads CGICFESYTRKEIASVSCGHPYCKTCWTGYITTKIEDGPGCLRVKCPEPSC. The IBR-type zinc finger occupies 190–251; sequence DKYYRYFLRS…SEDAHSPVDC (62 aa). The RING-type 2; atypical zinc-finger motif lies at 278 to 308; sequence CPKCKRPIEKSHGCNHMTCSASCGHRFCWIC. The active site involves Cys291. Zn(2+) contacts are provided by Cys296, Cys300, Cys305, Cys308, His315, and Cys318.

The protein belongs to the RBR family. Ariadne subfamily. Requires Zn(2+) as cofactor.

The enzyme catalyses [E2 ubiquitin-conjugating enzyme]-S-ubiquitinyl-L-cysteine + [acceptor protein]-L-lysine = [E2 ubiquitin-conjugating enzyme]-L-cysteine + [acceptor protein]-N(6)-ubiquitinyl-L-lysine.. Its pathway is protein modification; protein ubiquitination. Might act as an E3 ubiquitin-protein ligase, or as part of E3 complex, which accepts ubiquitin from specific E2 ubiquitin-conjugating enzymes and then transfers it to substrates. This is Probable E3 ubiquitin-protein ligase ARI10 (ARI10) from Arabidopsis thaliana (Mouse-ear cress).